Consider the following 127-residue polypeptide: Cyclin-dependent protein kinase inhibitor SIM (127 aa).

Residues 21-71 form a disordered region; the sequence is RANTNRDDDGGGCTTPTSSDHKIPPTTATTPPPPPQKPRPPSTPSSLGIRS. Pro residues predominate over residues 50–63; sequence TPPPPPQKPRPPST.

As to quaternary structure, interacts with CDKA-1. Interacts with CYCD2-1, CYCD3-2 and CYCD4-1. Interacts with CDKB1-1. Interacts with CPR5. Expressed in the shoot apical meristem, leaf primordia and the elongation zone of the root.

The protein resides in the nucleus. Its function is as follows. Cyclin-dependent protein kinase (CDK) inhibitor that functions as a repressor of mitosis in the endoreduplication cell cycle. Inhibits the kinase activity of CYCD3-1/CDKA-1, CYCD2-1/CDKA-1 and CYCB1-1/CDKB1-1 complexes in a dose dependent manner. Cooperates with SMR1 and SMR2 to promote endoreplication during leaf development. Required for normal trichome endoreplicating cell cycles. Positive regulator of effector-triggered immunity (ETI). The chain is Cyclin-dependent protein kinase inhibitor SIM from Arabidopsis thaliana (Mouse-ear cress).